Consider the following 187-residue polypeptide: Adenylate kinase (187 aa).

10 to 15 (GSGKGT) lines the ATP pocket. Positions 30 to 59 (STGDLLRSEVVAGTPLGLQAKQVMAQGDLV) are NMP. AMP is bound by residues Thr31, Arg36, 57 to 59 (DLV), 85 to 88 (GYPR), and Gln92. Residues 126–136 (GRAQAEGREDD) are LID. Arg127 contacts ATP. Residues Arg133 and Arg144 each coordinate AMP. Gly172 provides a ligand contact to ATP.

It belongs to the adenylate kinase family. In terms of assembly, monomer.

The protein resides in the cytoplasm. It carries out the reaction AMP + ATP = 2 ADP. It functions in the pathway purine metabolism; AMP biosynthesis via salvage pathway; AMP from ADP: step 1/1. In terms of biological role, catalyzes the reversible transfer of the terminal phosphate group between ATP and AMP. Plays an important role in cellular energy homeostasis and in adenine nucleotide metabolism. The polypeptide is Adenylate kinase (Xylella fastidiosa (strain M23)).